Consider the following 188-residue polypeptide: dCTP deaminase (188 aa).

DCTP contacts are provided by residues Lys-111–Arg-116, Thr-135–Glu-137, Gln-156, Tyr-170, and Gln-180. Glu-137 functions as the Proton donor/acceptor in the catalytic mechanism.

It belongs to the dCTP deaminase family. Homotrimer.

It catalyses the reaction dCTP + H2O + H(+) = dUTP + NH4(+). It participates in pyrimidine metabolism; dUMP biosynthesis; dUMP from dCTP (dUTP route): step 1/2. In terms of biological role, catalyzes the deamination of dCTP to dUTP. This Pseudomonas syringae pv. tomato (strain ATCC BAA-871 / DC3000) protein is dCTP deaminase.